Reading from the N-terminus, the 305-residue chain is Translation initiation factor eIF2B subunit alpha (305 aa).

N6-acetyllysine is present on Lys35.

It belongs to the eIF-2B alpha/beta/delta subunits family. Component of the translation initiation factor 2B (eIF2B) complex which is a heterodecamer of two sets of five different subunits: alpha, beta, gamma, delta and epsilon. Subunits alpha, beta and delta comprise a regulatory subcomplex and subunits epsilon and gamma comprise a catalytic subcomplex. Within the complex, the hexameric regulatory complex resides at the center, with the two heterodimeric catalytic subcomplexes bound on opposite sides.

The protein localises to the cytoplasm. It is found in the cytosol. Its activity is regulated as follows. Activated by the chemical integrated stress response (ISR) inhibitor ISRIB which stimulates guanine nucleotide exchange factor activity for both phosphorylated and unphosphorylated eIF2. Functionally, acts as a component of the translation initiation factor 2B (eIF2B) complex, which catalyzes the exchange of GDP for GTP on eukaryotic initiation factor 2 (eIF2) gamma subunit. Its guanine nucleotide exchange factor activity is repressed when bound to eIF2 complex phosphorylated on the alpha subunit, thereby limiting the amount of methionyl-initiator methionine tRNA available to the ribosome and consequently global translation is repressed. In Mus musculus (Mouse), this protein is Translation initiation factor eIF2B subunit alpha (Eif2b1).